The primary structure comprises 352 residues: MSKFWNERVKKLEPYVPGEQPKDQKYIKLNTNENPYPPSPMVIEAIKKEADYKLKLYPDPNCDSLKRTIAEYYGISDKEVFVGNGSDEVLAFSFMTFFSPRKTVFFADITYSFYKVYANLLNLNCELIPLKEDFSLDLDNFCRCNGGVIIPNPNAPTAKYIGLSDIKKILDWNKDSVVIIDEAYIDFGGESAVKFIKDYKNLLIVQTLSKSRSLAGLRIGFAMGSPELIEGLSRVKNSINSYTLDRLAIVGAEAAFKDKEYFEDARRKIIATRERVSTELKQIGFKVIESKANFIFISHTTISAESIFNELRKRGILVRYFKTARIDNFLRVSIGTDKEMSEFMDKIKECIA.

Lysine 210 carries the post-translational modification N6-(pyridoxal phosphate)lysine.

The protein belongs to the class-II pyridoxal-phosphate-dependent aminotransferase family. Histidinol-phosphate aminotransferase subfamily. Homodimer. Pyridoxal 5'-phosphate is required as a cofactor.

It carries out the reaction L-histidinol phosphate + 2-oxoglutarate = 3-(imidazol-4-yl)-2-oxopropyl phosphate + L-glutamate. The protein operates within amino-acid biosynthesis; L-histidine biosynthesis; L-histidine from 5-phospho-alpha-D-ribose 1-diphosphate: step 7/9. In Clostridium acetobutylicum (strain ATCC 824 / DSM 792 / JCM 1419 / IAM 19013 / LMG 5710 / NBRC 13948 / NRRL B-527 / VKM B-1787 / 2291 / W), this protein is Histidinol-phosphate aminotransferase.